The primary structure comprises 61 residues: Conotoxin Cal14.6 (61 aa).

A signal peptide spans Met1–Ala21. Positions Gly22–Gly38 are excised as a propeptide. At Pro57 the chain carries 4-hydroxyproline; partial. A Proline amide modification is found at Pro60.

In terms of processing, contains 2 disulfide bonds. As to expression, expressed by the venom duct.

Its subcellular location is the secreted. Functionally, probable neurotoxin with unknown target. Possibly targets ion channels. The sequence is that of Conotoxin Cal14.6 from Californiconus californicus (California cone).